We begin with the raw amino-acid sequence, 146 residues long: Probable glycine cleavage system H protein 1, mitochondrial (146 aa).

The N-terminal 30 residues, 1 to 30 (MLKTLRFGTRAFGQNLNIAKRNFCTRYTND), are a transit peptide targeting the mitochondrion. In terms of domain architecture, Lipoyl-binding spans 41–123 (NYRLGITDFA…MGDGWIVEYK (83 aa)). At K82 the chain carries N6-lipoyllysine.

The protein belongs to the GcvH family. In terms of assembly, the glycine cleavage system is composed of four proteins: P, T, L and H. (R)-lipoate is required as a cofactor.

The protein resides in the mitochondrion. Functionally, the glycine cleavage system catalyzes the degradation of glycine. The H protein shuttles the methylamine group of glycine from the P protein to the T protein. The protein is Probable glycine cleavage system H protein 1, mitochondrial (gcvH1) of Dictyostelium discoideum (Social amoeba).